We begin with the raw amino-acid sequence, 297 residues long: MFHKGATAVTASAFSGYFVAVQREGIFHYSLEQGWRKLFRLKSKIHCISYIGPYLFGVGEKGTVIRSADEGKTWTMSSFPTNATVWAITGRNNGFVCAHGKHCIYVSDDFGVSWRVAKPFAEFHNPPVIRSLCLHGGNLFIGTQIHEYFGGIWAYDIKRDTVQVVKKEKNRMTASMLVFNENWLVAAMGSVKGKHGAVTVRNLLNGEEFTIQSSMIRNEESFLDLSEDDGIIYVTTTQDENGFSRIYQVDLEARSLKWFDTIKGHGWRVANQKENFFCAGLYECKFVQPYEVSAMIH.

This is an uncharacterized protein from Bacillus subtilis (strain 168).